An 86-amino-acid polypeptide reads, in one-letter code: Small ribosomal subunit protein bS20 (86 aa).

The segment at 1–25 (MANIKSQMKRIRTNEAARKRNQSVK) is disordered.

This sequence belongs to the bacterial ribosomal protein bS20 family.

Its function is as follows. Binds directly to 16S ribosomal RNA. The polypeptide is Small ribosomal subunit protein bS20 (Nocardia farcinica (strain IFM 10152)).